We begin with the raw amino-acid sequence, 195 residues long: Small ribosomal subunit protein uS4c (195 aa).

In terms of domain architecture, S4 RNA-binding spans 82–143 (MRLDNILFRL…KQRSKALIQN (62 aa)).

Belongs to the universal ribosomal protein uS4 family. In terms of assembly, part of the 30S ribosomal subunit. Contacts protein S5. The interaction surface between S4 and S5 is involved in control of translational fidelity.

The protein resides in the plastid. Its subcellular location is the chloroplast. In terms of biological role, one of the primary rRNA binding proteins, it binds directly to 16S rRNA where it nucleates assembly of the body of the 30S subunit. Functionally, with S5 and S12 plays an important role in translational accuracy. This chain is Small ribosomal subunit protein uS4c (rps4), found in Pillansia templemannii.